A 475-amino-acid chain; its full sequence is tRNA-2-methylthio-N(6)-dimethylallyladenosine synthase (475 aa).

Positions 3 to 120 constitute an MTTase N-terminal domain; the sequence is KKLHIKTWGC…LPEMIDQIKD (118 aa). 6 residues coordinate [4Fe-4S] cluster: Cys12, Cys49, Cys83, Cys157, Cys161, and Cys164. Positions 143-375 constitute a Radical SAM core domain; that stretch reads RAEGPSAFVS…QDRITQQAMR (233 aa). The TRAM domain maps to 378–441; it reads RQMVGTVQRI…TNSLRGVFIR (64 aa).

It belongs to the methylthiotransferase family. MiaB subfamily. In terms of assembly, monomer. [4Fe-4S] cluster is required as a cofactor.

The protein localises to the cytoplasm. It carries out the reaction N(6)-dimethylallyladenosine(37) in tRNA + (sulfur carrier)-SH + AH2 + 2 S-adenosyl-L-methionine = 2-methylsulfanyl-N(6)-dimethylallyladenosine(37) in tRNA + (sulfur carrier)-H + 5'-deoxyadenosine + L-methionine + A + S-adenosyl-L-homocysteine + 2 H(+). Functionally, catalyzes the methylthiolation of N6-(dimethylallyl)adenosine (i(6)A), leading to the formation of 2-methylthio-N6-(dimethylallyl)adenosine (ms(2)i(6)A) at position 37 in tRNAs that read codons beginning with uridine. The chain is tRNA-2-methylthio-N(6)-dimethylallyladenosine synthase from Shewanella pealeana (strain ATCC 700345 / ANG-SQ1).